The chain runs to 338 residues: Ketol-acid reductoisomerase (NADP(+)) (338 aa).

The 181-residue stretch at 1 to 181 (MNVFYDKDAD…GGGRAGIIET (181 aa)) folds into the KARI N-terminal Rossmann domain. NADP(+) contacts are provided by residues 24-27 (YGSQ), R47, and S52. H107 is a catalytic residue. G133 serves as a coordination point for NADP(+). A KARI C-terminal knotted domain is found at 182 to 327 (NFREETETDL…AKLRAMMPWI (146 aa)). Positions 190, 194, 226, and 230 each coordinate Mg(2+). S251 serves as a coordination point for substrate.

Belongs to the ketol-acid reductoisomerase family. The cofactor is Mg(2+).

It catalyses the reaction (2R)-2,3-dihydroxy-3-methylbutanoate + NADP(+) = (2S)-2-acetolactate + NADPH + H(+). It carries out the reaction (2R,3R)-2,3-dihydroxy-3-methylpentanoate + NADP(+) = (S)-2-ethyl-2-hydroxy-3-oxobutanoate + NADPH + H(+). It participates in amino-acid biosynthesis; L-isoleucine biosynthesis; L-isoleucine from 2-oxobutanoate: step 2/4. The protein operates within amino-acid biosynthesis; L-valine biosynthesis; L-valine from pyruvate: step 2/4. In terms of biological role, involved in the biosynthesis of branched-chain amino acids (BCAA). Catalyzes an alkyl-migration followed by a ketol-acid reduction of (S)-2-acetolactate (S2AL) to yield (R)-2,3-dihydroxy-isovalerate. In the isomerase reaction, S2AL is rearranged via a Mg-dependent methyl migration to produce 3-hydroxy-3-methyl-2-ketobutyrate (HMKB). In the reductase reaction, this 2-ketoacid undergoes a metal-dependent reduction by NADPH to yield (R)-2,3-dihydroxy-isovalerate. This chain is Ketol-acid reductoisomerase (NADP(+)), found in Burkholderia multivorans (strain ATCC 17616 / 249).